A 752-amino-acid polypeptide reads, in one-letter code: Translation initiation factor IF-2 (752 aa).

The span at 148-159 (KKVKDKNKKEEP) shows a compositional bias: basic and acidic residues. The tract at residues 148-170 (KKVKDKNKKEEPAVTPSTAPRKK) is disordered. In terms of domain architecture, tr-type G spans 250 to 419 (PRPPIVTVMG…ALQAEIMELK (170 aa)). Positions 259–266 (GHVDHGKT) are G1. 259 to 266 (GHVDHGKT) provides a ligand contact to GTP. The interval 284 to 288 (GITQH) is G2. The G3 stretch occupies residues 305 to 308 (DTPG). GTP is bound by residues 305 to 309 (DTPGH) and 359 to 362 (NKID). The G4 stretch occupies residues 359–362 (NKID). The interval 395-397 (SAK) is G5.

This sequence belongs to the TRAFAC class translation factor GTPase superfamily. Classic translation factor GTPase family. IF-2 subfamily.

The protein resides in the cytoplasm. Functionally, one of the essential components for the initiation of protein synthesis. Protects formylmethionyl-tRNA from spontaneous hydrolysis and promotes its binding to the 30S ribosomal subunits. Also involved in the hydrolysis of GTP during the formation of the 70S ribosomal complex. This is Translation initiation factor IF-2 from Thermodesulfovibrio yellowstonii (strain ATCC 51303 / DSM 11347 / YP87).